We begin with the raw amino-acid sequence, 251 residues long: Lactose phosphotransferase system repressor (251 aa).

The region spanning 3-58 (KHERLDEIAKLVNKKGTIRTNEIVEGLNVSDMTVRRDLIELENKGILTKIHGGARS) is the HTH deoR-type domain. Residues 20–39 (IRTNEIVEGLNVSDMTVRRD) constitute a DNA-binding region (H-T-H motif).

In terms of biological role, repressor of the lactose catabolism operon. Galactose-6-phosphate is the inducer. The protein is Lactose phosphotransferase system repressor (lacR) of Staphylococcus aureus (strain NCTC 8325 / PS 47).